We begin with the raw amino-acid sequence, 102 residues long: ATP-dependent Clp protease adapter protein ClpS (102 aa).

Over residues 1 to 18 (MSQFDHQHLSDTEEKQEL) the composition is skewed to basic and acidic residues. The tract at residues 1 to 21 (MSQFDHQHLSDTEEKQELKPP) is disordered.

The protein belongs to the ClpS family. In terms of assembly, binds to the N-terminal domain of the chaperone ClpA.

In terms of biological role, involved in the modulation of the specificity of the ClpAP-mediated ATP-dependent protein degradation. The sequence is that of ATP-dependent Clp protease adapter protein ClpS from Idiomarina loihiensis (strain ATCC BAA-735 / DSM 15497 / L2-TR).